We begin with the raw amino-acid sequence, 133 residues long: MTFNLCVLTPNRIIWDSEVKEIILSTNSGQIGVLPNHAPIATAVDIGILRIRFNDQWLTVALMGGFARIGNNEITVLVNDAERGSDIDPQEAQQTLEIAEANLRKAEGKRQRIEANLALRRARTRLEAVNVIS.

It belongs to the ATPase epsilon chain family. F-type ATPases have 2 components, CF(1) - the catalytic core - and CF(0) - the membrane proton channel. CF(1) has five subunits: alpha(3), beta(3), gamma(1), delta(1), epsilon(1). CF(0) has three main subunits: a, b and c.

The protein resides in the plastid. It is found in the chloroplast thylakoid membrane. Its function is as follows. Produces ATP from ADP in the presence of a proton gradient across the membrane. This Jasminum nudiflorum (Winter jasmine) protein is ATP synthase epsilon chain, chloroplastic.